Here is a 1117-residue protein sequence, read N- to C-terminus: Centrosomal protein of 126 kDa (1117 aa).

The tract at residues 1–42 (MLAGRPGTRSAVGELGTESSDNLDRAPLGPRESGGHHRPGSY) is disordered. Positions 49–121 (LEKNLEEERQ…EEVTEKFQRA (73 aa)) form a coiled coil. Disordered stretches follow at residues 643–664 (AENS…QQFH) and 730–759 (KKEE…IIRK). Residues 730–744 (KKEESKIPVHDDSKT) are compositionally biased toward basic and acidic residues. The segment covering 745-758 (KQGKPQRGRAKIIR) has biased composition (basic residues).

As to quaternary structure, interacts with DCTN1. As to expression, expressed in brain, lung, skeletal muscle, kidney, pancreas, testis and ovary.

It is found in the midbody. It localises to the cytoplasm. The protein localises to the cytoskeleton. Its subcellular location is the microtubule organizing center. The protein resides in the centrosome. It is found in the cilium basal body. Its function is as follows. Participates in cytokinesis. Necessary for microtubules and mitotic spindle organization. Involved in primary cilium formation. The polypeptide is Centrosomal protein of 126 kDa (Homo sapiens (Human)).